A 170-amino-acid chain; its full sequence is Small ribosomal subunit protein uS5 (170 aa).

An S5 DRBM domain is found at 12 to 75 (WSELLVSVRR…NAAKKSMIRV (64 aa)).

It belongs to the universal ribosomal protein uS5 family. Part of the 30S ribosomal subunit. Contacts proteins S4 and S8.

With S4 and S12 plays an important role in translational accuracy. Functionally, located at the back of the 30S subunit body where it stabilizes the conformation of the head with respect to the body. The sequence is that of Small ribosomal subunit protein uS5 from Wolbachia sp. subsp. Brugia malayi (strain TRS).